The primary structure comprises 318 residues: Gamma-glutamyl hydrolase (318 aa).

The first 24 residues, 1–24 (MARLGRLLSVLGLVLCGATGLGLS), serve as a signal peptide directing secretion. The Gamma-glutamyl hydrolase domain maps to 25 to 318 (APPAPTPKKP…SSFQQSYIFD (294 aa)). N-linked (GlcNAc...) asparagine glycosylation is present at Asn116. Cys134 functions as the Nucleophile in the catalytic mechanism. Residues Asn163 and Asn203 are each glycosylated (N-linked (GlcNAc...) asparagine). The Proton donor role is filled by His244. N-linked (GlcNAc...) asparagine glycosylation is present at Asn307.

It belongs to the peptidase C26 family. In terms of assembly, homodimer.

It localises to the secreted. The protein resides in the extracellular space. Its subcellular location is the lysosome. It is found in the melanosome. The catalysed reaction is (6S)-5,6,7,8-tetrahydrofolyl-(gamma-L-Glu)(n) + (n-1) H2O = (6S)-5,6,7,8-tetrahydrofolate + (n-1) L-glutamate. Functionally, hydrolyzes the polyglutamate sidechains of pteroylpolyglutamates. Progressively removes gamma-glutamyl residues from pteroylpoly-gamma-glutamate to yield pteroyl-alpha-glutamate (folic acid) and free glutamate. May play an important role in the bioavailability of dietary pteroylpolyglutamates and in the metabolism of pteroylpolyglutamates and antifolates. Exhibits either endo- or exopeptidase activity depending upon the tissue of origin. When secreted, it acts primarily as an endopeptidase. The chain is Gamma-glutamyl hydrolase (GGH) from Bos taurus (Bovine).